A 273-amino-acid polypeptide reads, in one-letter code: 1,4-dihydroxy-2-naphthoyl-CoA synthase (273 aa).

Substrate is bound by residues Arg34, 73 to 77, Tyr85, 117 to 121, Thr143, Ser149, Tyr246, and Lys261; these read SGGDQ and YAVGG. 142–144 provides a ligand contact to hydrogencarbonate; it reads QTG. The span at 254–265 shows a compositional bias: basic and acidic residues; that stretch reads GRDAFKEKRDPD. The interval 254 to 273 is disordered; the sequence is GRDAFKEKRDPDFDQFPKFP.

Belongs to the enoyl-CoA hydratase/isomerase family. MenB subfamily. The cofactor is hydrogencarbonate.

The catalysed reaction is 2-succinylbenzoyl-CoA + H(+) = 1,4-dihydroxy-2-naphthoyl-CoA + H2O. It functions in the pathway quinol/quinone metabolism; 1,4-dihydroxy-2-naphthoate biosynthesis; 1,4-dihydroxy-2-naphthoate from chorismate: step 6/7. Its pathway is quinol/quinone metabolism; menaquinone biosynthesis. In terms of biological role, converts o-succinylbenzoyl-CoA (OSB-CoA) to 1,4-dihydroxy-2-naphthoyl-CoA (DHNA-CoA). This Staphylococcus aureus (strain MRSA252) protein is 1,4-dihydroxy-2-naphthoyl-CoA synthase.